The chain runs to 126 residues: Larval cuticle protein 2 (126 aa).

The signal sequence occupies residues 1–16; sequence MFKFVMILAVVGVATA. Residues 39–100 enclose the Chitin-binding type R&amp;R domain; sequence ADGFDSSLHT…PSGAWIPTPP (62 aa).

Its function is as follows. Component of the larval cuticle. This chain is Larval cuticle protein 2 (Lcp2), found in Drosophila melanogaster (Fruit fly).